We begin with the raw amino-acid sequence, 309 residues long: HPr kinase/phosphorylase (309 aa).

Catalysis depends on residues histidine 138 and lysine 159. An ATP-binding site is contributed by 153–160; that stretch reads GQSGVGKS. Serine 160 serves as a coordination point for Mg(2+). The active-site Proton acceptor; for phosphorylation activity. Proton donor; for dephosphorylation activity is the aspartate 177. The segment at 201–210 is important for the catalytic mechanism of both phosphorylation and dephosphorylation; that stretch reads LEIRGLGIIN. Glutamate 202 contributes to the Mg(2+) binding site. Arginine 243 is an active-site residue. The important for the catalytic mechanism of dephosphorylation stretch occupies residues 264–269; the sequence is PVRPGR.

It belongs to the HPrK/P family. In terms of assembly, homohexamer. Mg(2+) is required as a cofactor.

The enzyme catalyses [HPr protein]-L-serine + ATP = [HPr protein]-O-phospho-L-serine + ADP + H(+). The catalysed reaction is [HPr protein]-O-phospho-L-serine + phosphate + H(+) = [HPr protein]-L-serine + diphosphate. Its function is as follows. Catalyzes the ATP- as well as the pyrophosphate-dependent phosphorylation of a specific serine residue in HPr, a phosphocarrier protein of the phosphoenolpyruvate-dependent sugar phosphotransferase system (PTS). HprK/P also catalyzes the pyrophosphate-producing, inorganic phosphate-dependent dephosphorylation (phosphorolysis) of seryl-phosphorylated HPr (P-Ser-HPr). The two antagonistic activities of HprK/P are regulated by several intracellular metabolites, which change their concentration in response to the absence or presence of rapidly metabolisable carbon sources (glucose, fructose, etc.) in the growth medium. Also phosphorylates/dephosphorylates the HPr-like catabolite repression protein crh on a specific serine residue. Therefore, by controlling the phosphorylation state of HPr and crh, HPrK/P is a sensor enzyme that plays a major role in the regulation of carbon metabolism and sugar transport: it mediates carbon catabolite repression (CCR), and regulates PTS-catalyzed carbohydrate uptake and inducer exclusion. This is HPr kinase/phosphorylase from Bacillus cereus (strain AH820).